A 406-amino-acid polypeptide reads, in one-letter code: Probable sodium/metabolite cotransporter BASS1, chloroplastic (406 aa).

Residues 1–64 (MPLLRRPPAA…RHLCGIPSSR (64 aa)) constitute a chloroplast transit peptide. The next 9 membrane-spanning stretches (helical) occupy residues 98–118 (VGEV…AVAL), 123–143 (AFLW…MLGM), 152–172 (LKTA…QYSV), 187–209 (PSYY…SNIV), 217–237 (VALS…LTPL), 252–272 (MGLF…GALL), 278–298 (GLVQ…VAVL), 315–335 (LQVV…GYVL), and 376–396 (VPCA…AGIW).

The protein belongs to the bile acid:sodium symporter (BASS) (TC 2.A.28) family.

Its subcellular location is the membrane. The protein localises to the plastid. It is found in the chloroplast envelope. Its function is as follows. May function as sodium-coupled metabolite transporter across the chloroplast envelope. This Oryza sativa subsp. japonica (Rice) protein is Probable sodium/metabolite cotransporter BASS1, chloroplastic (BASS1).